The following is a 724-amino-acid chain: NAD(+) hydrolase SARM1 (724 aa).

A mitochondrion-targeting transit peptide spans 1–27 (MVLTLLFSAYKLCRFFIMSGPRPGADR). An ARM 1 repeat occupies 60-100 (EVQGALERSLPELQQALSELKQASAAQAVGAGLAEVFQLVE). Residues tryptophan 103, arginine 110, 149 to 157 (EQILVAENR), and 190 to 193 (HMFK) each bind NAD(+). ARM repeat units follow at residues 114–153 (QGLC…QILV), 155–193 (ENRD…HMFK), 196–235 (EETC…NCAL), 237–280 (GGQT…LATN), 281–314 (KEVE…CLVD), 315–354 (ASDT…AEAA), and 359–402 (QGKT…EEVP). SAM domains follow at residues 412–476 (WKEA…LKTF) and 486–548 (NLAD…MLHS). Phosphoserine occurs at positions 548 and 558. The region spanning 560-703 (DTPDVFISYR…KIIRFLQGRP (144 aa)) is the TIR domain. Residues 569–570 (RR) and glutamate 599 contribute to the NAD(+) site. The active site involves glutamate 642. Residues 703-717 (PSQDSSAGSDTSLEG) are compositionally biased toward polar residues. Positions 703 to 724 (PSQDSSAGSDTSLEGATSMGLP) are disordered.

This sequence belongs to the SARM1 family. In terms of assembly, homooctamer; forms an octameric ring via SAM domains. Interacts with TICAM1/TRIF and thereby interferes with TICAM1/TRIF function. Interacts with MAPK10/JNK3 and SDC2 (via cytoplasmic domain). In terms of processing, phosphorylation at Ser-548 by JNK kinases (MAPK8, MAPK9 and /or MAPK10) enhance the NAD(+) hydrolase (NADase) activity. Phosphorylation at Ser-548 and subsequent activation takes place in response to oxidative stress conditions and inhibits mitochondrial respiration. Phosphorylation at Ser-548 increases in response to cerebral ischemia/reperfusion (I/R) injury.

It is found in the cytoplasm. The protein resides in the cell projection. The protein localises to the axon. Its subcellular location is the dendrite. It localises to the synapse. It is found in the mitochondrion. The enzyme catalyses NAD(+) + H2O = ADP-D-ribose + nicotinamide + H(+). It carries out the reaction NAD(+) = cyclic ADP-beta-D-ribose + nicotinamide + H(+). It catalyses the reaction NADP(+) + H2O = ADP-D-ribose 2'-phosphate + nicotinamide + H(+). Its activity is regulated as follows. Autoinhibited: in the inactive state, the enzymatic TIR domain is held apart by the autoinhibiting ARM repeats. NAD(+)-binding to ARM repeats maintains an inactive state by promoting interaction between ARM repeats and the TIR domain, thereby facilitating inhibition of the enzymatic TIR domain. Following activation, possibly by nicotinamide mononucleotide (NMN), auto-inhibitory interactions are released, allowing self-association of the TIR domains and subsequent activation of the NAD(+) hydrolase (NADase) activity. Self-association of TIR domains is facilitated by the octamer of SAM domains. Functionally, NAD(+) hydrolase, which plays a key role in axonal degeneration following injury by regulating NAD(+) metabolism. Acts as a negative regulator of MYD88- and TRIF-dependent toll-like receptor signaling pathway by promoting Wallerian degeneration, an injury-induced form of programmed subcellular death which involves degeneration of an axon distal to the injury site. Wallerian degeneration is triggered by NAD(+) depletion: in response to injury, SARM1 is activated and catalyzes cleavage of NAD(+) into ADP-D-ribose (ADPR), cyclic ADPR (cADPR) and nicotinamide; NAD(+) cleavage promoting cytoskeletal degradation and axon destruction. Also able to hydrolyze NADP(+), but not other NAD(+)-related molecules. Can activate neuronal cell death in response to stress. Regulates dendritic arborization through the MAPK4-JNK pathway. Involved in innate immune response: inhibits both TICAM1/TRIF- and MYD88-dependent activation of JUN/AP-1, TRIF-dependent activation of NF-kappa-B and IRF3, and the phosphorylation of MAPK14/p38. This is NAD(+) hydrolase SARM1 from Rattus norvegicus (Rat).